A 286-amino-acid chain; its full sequence is MPIKIENLTYTYMPGTPFEKKALDNVNITIEDGEFAVFIGHTGSGKSTLIQQINGLLKPTSGSIFIDDVDITDKSVKLNDIRKKVGLVFQYPEYQLFEETIEKDIAFGPRNMGLSEEEVSTRVKKAMKMVGLEYNDFKDKSPFELSGGQKRRVAIAGVVAMEPKVLILDEPTAGLDPKGRDDILYEIKKLQKEYKMTIILVSHSMEDVAKVADKIFVMYDSRCILSGNLDEVFNEIDTLEKVGLAVPKVTYLVRKLREKGFDISKDIFTIEAAKKEILRVLESAKR.

Residues 3–245 enclose the ABC transporter domain; sequence IKIENLTYTY…IDTLEKVGLA (243 aa). Residue 40 to 47 participates in ATP binding; the sequence is GHTGSGKS.

It belongs to the ABC transporter superfamily. Energy-coupling factor EcfA family. As to quaternary structure, forms a stable energy-coupling factor (ECF) transporter complex composed of 2 membrane-embedded substrate-binding proteins (S component), 2 ATP-binding proteins (A component) and 2 transmembrane proteins (T component).

It is found in the cell membrane. ATP-binding (A) component of a common energy-coupling factor (ECF) ABC-transporter complex. Unlike classic ABC transporters this ECF transporter provides the energy necessary to transport a number of different substrates. The chain is Energy-coupling factor transporter ATP-binding protein EcfA2 from Clostridium acetobutylicum (strain ATCC 824 / DSM 792 / JCM 1419 / IAM 19013 / LMG 5710 / NBRC 13948 / NRRL B-527 / VKM B-1787 / 2291 / W).